The following is a 505-amino-acid chain: ATP synthase subunit alpha, chloroplastic (505 aa).

170 to 177 (GDRQTGKT) contacts ATP.

Belongs to the ATPase alpha/beta chains family. As to quaternary structure, F-type ATPases have 2 components, CF(1) - the catalytic core - and CF(0) - the membrane proton channel. CF(1) has five subunits: alpha(3), beta(3), gamma(1), delta(1), epsilon(1). CF(0) has four main subunits: a, b, b' and c.

It is found in the plastid. It localises to the chloroplast thylakoid membrane. The catalysed reaction is ATP + H2O + 4 H(+)(in) = ADP + phosphate + 5 H(+)(out). Produces ATP from ADP in the presence of a proton gradient across the membrane. The alpha chain is a regulatory subunit. The protein is ATP synthase subunit alpha, chloroplastic of Carica papaya (Papaya).